The following is a 397-amino-acid chain: Carbamoyl phosphate synthase small chain (397 aa).

The tract at residues Met-1–His-204 is CPSase. Ser-57, Gly-252, and Gly-254 together coordinate L-glutamine. In terms of domain architecture, Glutamine amidotransferase type-1 spans His-204–Ser-391. Cys-280 (nucleophile) is an active-site residue. L-glutamine is bound by residues Leu-281, Gln-284, Asn-322, and Tyr-325. Active-site residues include His-364 and Glu-366.

The protein belongs to the CarA family. Composed of two chains; the small (or glutamine) chain promotes the hydrolysis of glutamine to ammonia, which is used by the large (or ammonia) chain to synthesize carbamoyl phosphate. Tetramer of heterodimers (alpha,beta)4.

The catalysed reaction is hydrogencarbonate + L-glutamine + 2 ATP + H2O = carbamoyl phosphate + L-glutamate + 2 ADP + phosphate + 2 H(+). It carries out the reaction L-glutamine + H2O = L-glutamate + NH4(+). Its pathway is amino-acid biosynthesis; L-arginine biosynthesis; carbamoyl phosphate from bicarbonate: step 1/1. The protein operates within pyrimidine metabolism; UMP biosynthesis via de novo pathway; (S)-dihydroorotate from bicarbonate: step 1/3. In terms of biological role, small subunit of the glutamine-dependent carbamoyl phosphate synthetase (CPSase). CPSase catalyzes the formation of carbamoyl phosphate from the ammonia moiety of glutamine, carbonate, and phosphate donated by ATP, constituting the first step of 2 biosynthetic pathways, one leading to arginine and/or urea and the other to pyrimidine nucleotides. The small subunit (glutamine amidotransferase) binds and cleaves glutamine to supply the large subunit with the substrate ammonia. The polypeptide is Carbamoyl phosphate synthase small chain (Buchnera aphidicola subsp. Baizongia pistaciae (strain Bp)).